Here is a 55-residue protein sequence, read N- to C-terminus: Spermatid nuclear transition protein 1 (55 aa).

The segment covering 1-42 (MSTSRKLKSHGMRRSKSRSPHKGVKRGGSKRKYRKGNLKSRK) has biased composition (basic residues). The interval 1–55 (MSTSRKLKSHGMRRSKSRSPHKGVKRGGSKRKYRKGNLKSRKRGDDANRNYRSHL) is disordered. Phosphoserine is present on residues S9 and S40.

It belongs to the nuclear transition protein 1 family. In terms of tissue distribution, expressed by spermatids (at protein level).

It localises to the nucleus. Its subcellular location is the chromosome. In terms of biological role, plays a key role in the replacement of histones to protamine in the elongating spermatids of mammals. In condensing spermatids, loaded onto the nucleosomes, where it promotes the recruitment and processing of protamines, which are responsible for histone eviction. The sequence is that of Spermatid nuclear transition protein 1 (TNP1) from Homo sapiens (Human).